Consider the following 388-residue polypeptide: Chorismate synthase (388 aa).

Residues Arg39 and Arg45 each coordinate NADP(+). Residues 95–118 form a disordered region; sequence EKNEKSRRVSRPRPGHADLVGGMK. FMN contacts are provided by residues 130–132, 251–252, Gly296, 311–315, and Arg337; these read RSS, NA, and KPIPT.

Belongs to the chorismate synthase family. In terms of assembly, homotetramer. FMNH2 is required as a cofactor.

The enzyme catalyses 5-O-(1-carboxyvinyl)-3-phosphoshikimate = chorismate + phosphate. It participates in metabolic intermediate biosynthesis; chorismate biosynthesis; chorismate from D-erythrose 4-phosphate and phosphoenolpyruvate: step 7/7. In terms of biological role, catalyzes the anti-1,4-elimination of the C-3 phosphate and the C-6 proR hydrogen from 5-enolpyruvylshikimate-3-phosphate (EPSP) to yield chorismate, which is the branch point compound that serves as the starting substrate for the three terminal pathways of aromatic amino acid biosynthesis. This reaction introduces a second double bond into the aromatic ring system. The polypeptide is Chorismate synthase (Listeria monocytogenes serovar 1/2a (strain ATCC BAA-679 / EGD-e)).